The sequence spans 154 residues: Myoglobin (154 aa).

The 147-residue stretch at 2–148 folds into the Globin domain; sequence GLSDAEWQLV…FRNDIAAQYK (147 aa). Phosphoserine is present on serine 4. Position 65 (histidine 65) interacts with nitrite. Position 65 (histidine 65) interacts with O2. Residue threonine 68 is modified to Phosphothreonine. Histidine 94 contacts heme b.

It belongs to the globin family. In terms of assembly, monomeric.

It localises to the cytoplasm. Its subcellular location is the sarcoplasm. The enzyme catalyses Fe(III)-heme b-[protein] + nitric oxide + H2O = Fe(II)-heme b-[protein] + nitrite + 2 H(+). It carries out the reaction H2O2 + AH2 = A + 2 H2O. Functionally, monomeric heme protein which primary function is to store oxygen and facilitate its diffusion within muscle tissues. Reversibly binds oxygen through a pentacoordinated heme iron and enables its timely and efficient release as needed during periods of heightened demand. Depending on the oxidative conditions of tissues and cells, and in addition to its ability to bind oxygen, it also has a nitrite reductase activity whereby it regulates the production of bioactive nitric oxide. Under stress conditions, like hypoxia and anoxia, it also protects cells against reactive oxygen species thanks to its pseudoperoxidase activity. The polypeptide is Myoglobin (MB) (Oryctolagus cuniculus (Rabbit)).